The sequence spans 325 residues: Phospho-N-acetylmuramoyl-pentapeptide-transferase (325 aa).

The next 10 helical transmembrane spans lie at 3–23 (LMIY…PILI), 48–68 (GTPT…VFVV), 79–99 (AIFA…LKII), 106–126 (LKAY…GFYA), 136–156 (IIVP…PFII), 174–194 (GLAT…SYAT), 199–219 (LAVF…YNAY), 223–243 (VFMG…VAMM), 246–266 (LPLI…SVIL), and 298–318 (IVSI…LSLI).

It belongs to the glycosyltransferase 4 family. MraY subfamily. The cofactor is Mg(2+).

The protein localises to the cell membrane. It catalyses the reaction UDP-N-acetyl-alpha-D-muramoyl-L-alanyl-gamma-D-glutamyl-meso-2,6-diaminopimeloyl-D-alanyl-D-alanine + di-trans,octa-cis-undecaprenyl phosphate = di-trans,octa-cis-undecaprenyl diphospho-N-acetyl-alpha-D-muramoyl-L-alanyl-D-glutamyl-meso-2,6-diaminopimeloyl-D-alanyl-D-alanine + UMP. The protein operates within cell wall biogenesis; peptidoglycan biosynthesis. Its function is as follows. Catalyzes the initial step of the lipid cycle reactions in the biosynthesis of the cell wall peptidoglycan: transfers peptidoglycan precursor phospho-MurNAc-pentapeptide from UDP-MurNAc-pentapeptide onto the lipid carrier undecaprenyl phosphate, yielding undecaprenyl-pyrophosphoryl-MurNAc-pentapeptide, known as lipid I. In Clostridium novyi (strain NT), this protein is Phospho-N-acetylmuramoyl-pentapeptide-transferase.